A 205-amino-acid polypeptide reads, in one-letter code: Large ribosomal subunit protein uL4 (205 aa).

Residues 45–97 (RQGTSAVKNRSAVRGGGKKPWRQKGTGRARQGSIRAPQWRGGGTVFGPTPRSY) are disordered. Residues 60-71 (GGKKPWRQKGTG) are compositionally biased toward basic residues.

Belongs to the universal ribosomal protein uL4 family. As to quaternary structure, part of the 50S ribosomal subunit.

In terms of biological role, one of the primary rRNA binding proteins, this protein initially binds near the 5'-end of the 23S rRNA. It is important during the early stages of 50S assembly. It makes multiple contacts with different domains of the 23S rRNA in the assembled 50S subunit and ribosome. Functionally, forms part of the polypeptide exit tunnel. In Lactobacillus gasseri (strain ATCC 33323 / DSM 20243 / BCRC 14619 / CIP 102991 / JCM 1131 / KCTC 3163 / NCIMB 11718 / NCTC 13722 / AM63), this protein is Large ribosomal subunit protein uL4.